We begin with the raw amino-acid sequence, 259 residues long: Global transcriptional regulator CodY (259 aa).

Residues 1–155 (MELLAKTRKL…SSTVVGMEIL (155 aa)) form a GAF domain region. A DNA-binding region (H-T-H motif) is located at residues 203–222 (ASKIADRVGITRSVIVNALR). The residue at position 215 (Ser215) is a Phosphoserine.

It belongs to the CodY family.

Its subcellular location is the cytoplasm. Its function is as follows. DNA-binding global transcriptional regulator which is involved in the adaptive response to starvation and acts by directly or indirectly controlling the expression of numerous genes in response to nutrient availability. During rapid exponential growth, CodY is highly active and represses genes whose products allow adaptation to nutrient depletion. This Bacillus anthracis (strain A0248) protein is Global transcriptional regulator CodY.